We begin with the raw amino-acid sequence, 241 residues long: Capsid protein (241 aa).

Positions 1–26 match the Bipartite nuclear localization signal motif; sequence MSPASSWKRKRPSSSSAQASKKRRVY. The segment at 1–30 is disordered; that stretch reads MSPASSWKRKRPSSSSAQASKKRRVYRPAV.

It belongs to the geminiviridae capsid protein family. Homomultimer. Interacts with the movement protein. Binds to single-stranded and double-stranded viral DNA.

The protein localises to the virion. It is found in the host nucleus. Its function is as follows. Encapsidates the viral genome into characteristic twinned ('geminate') particles. Binds the genomic viral ssDNA and shuttles it into and out of the cell nucleus. Plays a role in protection of the genome from degradation, virus acquisition and transmission by insect vectors, infectivity, and systemic movement. The CP of monopartite geminiviruses is absolutely essential for virus movement. The protein is Capsid protein of Avena sativa (Oat).